The sequence spans 336 residues: uncharacterized protein (336 aa).

The ATP-grasp domain maps to 123 to 323; it reads KTLMRDSGVP…YSSLINGILD (201 aa).

Belongs to the D-alanine--D-alanine ligase family.

Its function is as follows. Could be involved in the biosynthesis of a cell wall component. This is an uncharacterized protein from Sinorhizobium fredii (strain NBRC 101917 / NGR234).